Reading from the N-terminus, the 213-residue chain is Urease accessory protein UreG (213 aa).

12-19 is a GTP binding site; that stretch reads GPVGSGKT.

Belongs to the SIMIBI class G3E GTPase family. UreG subfamily. In terms of assembly, homodimer. UreD, UreF and UreG form a complex that acts as a GTP-hydrolysis-dependent molecular chaperone, activating the urease apoprotein by helping to assemble the nickel containing metallocenter of UreC. The UreE protein probably delivers the nickel.

The protein localises to the cytoplasm. Facilitates the functional incorporation of the urease nickel metallocenter. This process requires GTP hydrolysis, probably effectuated by UreG. The polypeptide is Urease accessory protein UreG (Marinomonas sp. (strain MWYL1)).